Consider the following 228-residue polypeptide: ATP synthase subunit a 2 (228 aa).

The next 6 membrane-spanning stretches (helical) occupy residues 16 to 36 (VGTTVVTTWGIMVVLSLGAWL), 74 to 94 (VFPFVATLWLFIGIANLSSLI), 103 to 123 (DLSATTALALLVFFSVHWFGI), 139 to 159 (SPFLLPFHVIGEITRTLALAV), 173 to 193 (LLVLLVAGLFAPIPLLMLHIV), and 194 to 214 (EALVQAYIFGMLTLVYIAGAI).

It belongs to the ATPase A chain family. F-type ATPases have 2 components, CF(1) - the catalytic core - and CF(0) - the membrane proton channel. CF(1) has five subunits: alpha(3), beta(3), gamma(1), delta(1), epsilon(1). CF(0) has three main subunits: a(1), b(2) and c(9-12). The alpha and beta chains form an alternating ring which encloses part of the gamma chain. CF(1) is attached to CF(0) by a central stalk formed by the gamma and epsilon chains, while a peripheral stalk is formed by the delta and b chains.

The protein localises to the cell inner membrane. Key component of the proton channel; it plays a direct role in the translocation of protons across the membrane. This Pelobacter propionicus (strain DSM 2379 / NBRC 103807 / OttBd1) protein is ATP synthase subunit a 2.